The primary structure comprises 240 residues: Large ribosomal subunit protein uL2 (240 aa).

Over residues 1 to 11 the composition is skewed to polar residues; it reads MGKRLISQNRG. Disordered regions lie at residues 1–28 and 206–240; these read MGKR…KGAV and GGGR…TGRK. Basic residues-rich tracts occupy residues 13–28 and 224–240; these read GTPK…KGAV and SPGR…TGRK.

This sequence belongs to the universal ribosomal protein uL2 family. As to quaternary structure, part of the 50S ribosomal subunit. Forms a bridge to the 30S subunit in the 70S ribosome.

Functionally, one of the primary rRNA binding proteins. Required for association of the 30S and 50S subunits to form the 70S ribosome, for tRNA binding and peptide bond formation. It has been suggested to have peptidyltransferase activity; this is somewhat controversial. Makes several contacts with the 16S rRNA in the 70S ribosome. The polypeptide is Large ribosomal subunit protein uL2 (Methanococcus maripaludis (strain C5 / ATCC BAA-1333)).